A 290-amino-acid polypeptide reads, in one-letter code: GTPase Era (290 aa).

The 168-residue stretch at 2–169 folds into the Era-type G domain; sequence KSGFAAILGR…KNKIYENFSE (168 aa). The tract at residues 10-17 is G1; that stretch reads GRPSTGKS. Position 10–17 (10–17) interacts with GTP; it reads GRPSTGKS. Positions 36–40 are G2; the sequence is QTTRN. The interval 57-60 is G3; it reads DTPG. GTP is bound by residues 57 to 61 and 119 to 122; these read DTPGF and NKID. A G4 region spans residues 119-122; the sequence is NKID. The interval 148–150 is G5; sequence ISA. Residues 200-276 enclose the KH type-2 domain; that stretch reads LKEELPYSLY…NLFLQVKLKK (77 aa).

This sequence belongs to the TRAFAC class TrmE-Era-EngA-EngB-Septin-like GTPase superfamily. Era GTPase family. In terms of assembly, monomer.

It is found in the cytoplasm. It localises to the cell inner membrane. Functionally, an essential GTPase that binds both GDP and GTP, with rapid nucleotide exchange. Plays a role in 16S rRNA processing and 30S ribosomal subunit biogenesis and possibly also in cell cycle regulation and energy metabolism. This chain is GTPase Era, found in Borreliella burgdorferi (strain ATCC 35210 / DSM 4680 / CIP 102532 / B31) (Borrelia burgdorferi).